A 633-amino-acid chain; its full sequence is Protein BZZ1 (633 aa).

Residues 5 to 271 enclose the F-BAR domain; the sequence is LSIGNEIKDS…VVKQNKPSLN (267 aa). Residues 138 to 210 are a coiled coil; that stretch reads DMVNKKDNIY…INQANRTKDK (73 aa). Phosphoserine is present on residues Ser327, Ser463, Ser472, and Ser476. A disordered region spans residues 429–495; sequence VDSKPSSGGS…KKTTQNSSDD (67 aa). Low complexity predominate over residues 474–493; it reads NNSIRTTSTNNTKKTTQNSS. 2 consecutive SH3 domains span residues 493–555 and 577–633; these read SDDG…ISSA and LPVR…SYCK.

This sequence belongs to the BZZ1 family. Interacts with LAS17 and MYO5.

The protein resides in the cytoplasm. Its subcellular location is the cytoskeleton. It is found in the actin patch. In terms of biological role, plays a role in endocytosis and trafficking to the vacuole. Functions with type I myosins to restore polarity of the actin cytoskeleton after NaCl stress. The protein is Protein BZZ1 (BZZ1) of Saccharomyces cerevisiae (strain ATCC 204508 / S288c) (Baker's yeast).